Consider the following 238-residue polypeptide: Probable amino-acid ABC transporter permease protein y4tF (238 aa).

The region spanning 29 to 223 is the ABC transmembrane type-1 domain; it reads AWVTIQFTLY…GIALVLSFFM (195 aa). 5 helical membrane-spanning segments follow: residues 33-53, 77-97, 103-123, 152-172, and 203-223; these read IQFT…FGIG, LLVQ…MMGI, PVVA…AEIV, VALP…AIAA, and TVYT…SFFM.

This sequence belongs to the binding-protein-dependent transport system permease family. HisMQ subfamily.

It is found in the cell inner membrane. Probably part of the binding-protein-dependent transport system y4tEFGH for an amino acid. Probably responsible for the translocation of the substrate across the membrane. The sequence is that of Probable amino-acid ABC transporter permease protein y4tF from Sinorhizobium fredii (strain NBRC 101917 / NGR234).